We begin with the raw amino-acid sequence, 1024 residues long: Beta-galactosidase (1024 aa).

2 residues coordinate substrate: asparagine 103 and aspartate 202. Na(+) is bound at residue aspartate 202. The Mg(2+) site is built by glutamate 417, histidine 419, and glutamate 462. Residues glutamate 462 and glutamate 538–histidine 541 contribute to the substrate site. The active-site Proton donor is glutamate 462. Glutamate 538 serves as the catalytic Nucleophile. Mg(2+) is bound at residue asparagine 598. Positions 602 and 605 each coordinate Na(+). The substrate site is built by asparagine 605 and tryptophan 1000.

It belongs to the glycosyl hydrolase 2 family. In terms of assembly, homotetramer. It depends on Mg(2+) as a cofactor. Na(+) serves as cofactor.

The enzyme catalyses Hydrolysis of terminal non-reducing beta-D-galactose residues in beta-D-galactosides.. In Escherichia coli O9:H4 (strain HS), this protein is Beta-galactosidase.